A 149-amino-acid polypeptide reads, in one-letter code: Calmodulin (149 aa).

An N-acetylalanine modification is found at Ala-2. EF-hand domains are found at residues 8–43 (EQIAEFKEAFSLFDKDGDGTITTKELGTVMRSLGQN), 44–79 (PTEAELQDMINEVDADGNGTIDFPEFLTMMARKMKD), 81–116 (DSEEEIREAFRVFDKDGNGYISAAELRYVMTNLGEK), and 117–149 (LTDEXVDEMIREADIDGDGQVNYEEFVQMMTAK). Asp-21, Asp-23, Asp-25, Thr-27, Glu-32, Asp-57, Asp-59, Asn-61, Thr-63, Glu-68, Asp-94, Asp-96, Asn-98, Tyr-100, and Glu-105 together coordinate Ca(2+). N6,N6,N6-trimethyllysine is present on Lys-116. Ca(2+) contacts are provided by Asp-130, Asp-132, Asp-134, Gln-136, and Glu-141.

It belongs to the calmodulin family.

Functionally, calmodulin acts as part of a calcium signal transduction pathway by mediating the control of a large number of enzymes, ion channels, aquaporins and other proteins through calcium-binding. Calcium-binding is required for the activation of calmodulin. Among the enzymes to be stimulated by the calmodulin-calcium complex are a number of protein kinases, such as myosin light-chain kinases and calmodulin-dependent protein kinase type II (CaMK2), and phosphatases. This is Calmodulin (calm) from Oreochromis mossambicus (Mozambique tilapia).